The following is a 298-amino-acid chain: uncharacterized protein (298 aa).

This is an uncharacterized protein from Orgyia pseudotsugata multicapsid polyhedrosis virus (OpMNPV).